The sequence spans 388 residues: Integrase (388 aa).

In terms of domain architecture, Core-binding (CB) spans 70–151 (YTVADAVNDW…CLNRAVKRAM (82 aa)). The region spanning 173 to 379 (RPSKALTFAQ…VIQTGAVVMD (207 aa)) is the Tyr recombinase domain. Residues arginine 208, lysine 249, arginine 330, and histidine 353 contribute to the active site. Catalysis depends on tyrosine 363, which acts as the O-(3'-phospho-DNA)-tyrosine intermediate.

It belongs to the 'phage' integrase family.

In terms of biological role, required for integration of pSAM2. This is Integrase (int) from Streptomyces ambofaciens.